Consider the following 409-residue polypeptide: Nucleoprotein (409 aa).

Disordered regions lie at residues 1-32 (MASG…SSGN), 44-63 (LNSP…ENLK), 120-145 (GADT…LRFS), and 164-193 (RSGR…SGAE). Positions 15–31 (PVIKLGGPKPPKVGSSG) are enriched in low complexity. Residues 29–160 (SSGNASWFQA…GNFRWDFIPI (132 aa)) form an RNA-binding region. Residues 31–156 (GNASWFQALK…GGPDGNFRWD (126 aa)) enclose the CoV N NTD domain. A compositionally biased stretch (low complexity) spans 164-179 (RSGRSTAASSAASSRA). Residues 180 to 192 (PSRDGSRGRRSGA) are compositionally biased toward basic and acidic residues. S190 is modified (phosphoserine; by host). Residues 215–331 (TKAKADEMAH…QCVDGVGTRP (117 aa)) form the CoV N CTD domain. Positions 226-333 (RYCKRTIPPG…VDGVGTRPKD (108 aa)) are dimerization. A disulfide bridge links C320 with C323. Residues 326 to 409 (GVGTRPKDDE…GDSALGENEL (84 aa)) form a disordered region. Positions 341–355 (RPNSRPATRTSSPAP) are enriched in polar residues. Over residues 358–367 (QRQKKEKKSK) the composition is skewed to basic residues. The span at 368-384 (KQDDEVDKALTSDEERN) shows a compositional bias: basic and acidic residues. T378 bears the Phosphothreonine; by host mark. S379 is subject to Phosphoserine; by host.

Belongs to the gammacoronavirus nucleocapsid protein family. Homooligomer. Both monomeric and oligomeric forms interact with RNA. Interacts with protein M. Interacts with NSP3; this interaction serves to tether the genome to the newly translated replicase-transcriptase complex at a very early stage of infection. ADP-ribosylated. The ADP-ribosylation is retained in the virion during infection. In terms of processing, phosphorylated on serine and threonine residues.

The protein localises to the virion. Its subcellular location is the host endoplasmic reticulum-Golgi intermediate compartment. It localises to the host Golgi apparatus. Functionally, packages the positive strand viral genome RNA into a helical ribonucleocapsid (RNP) and plays a fundamental role during virion assembly through its interactions with the viral genome and membrane protein M. Plays an important role in enhancing the efficiency of subgenomic viral RNA transcription as well as viral replication. This is Nucleoprotein from Avian infectious bronchitis virus (strain H120) (IBV).